We begin with the raw amino-acid sequence, 274 residues long: Copper chaperone for superoxide dismutase (274 aa).

One can recognise an HMA domain in the interval 11 to 74 (ACMLEFAVQM…LLEDTGRQAV (64 aa)). Cu cation is bound by residues cysteine 22 and cysteine 25. A Glycyl lysine isopeptide (Lys-Gly) (interchain with G-Cter in ubiquitin) cross-link involves residue lysine 76. The segment at 88–234 (AAVAILGGSG…LACGIIARSA (147 aa)) is superoxide dismutase-like. Cysteine 141 and cysteine 227 are oxidised to a cystine. Zn(2+) is bound by residues histidine 147, histidine 155, histidine 164, and aspartate 167. Glycyl lysine isopeptide (Lys-Gly) (interchain with G-Cter in ubiquitin) cross-links involve residues lysine 189, lysine 216, and lysine 241. Cu cation-binding residues include cysteine 244 and cysteine 246.

This sequence in the C-terminal section; belongs to the Cu-Zn superoxide dismutase family. In terms of assembly, homodimer, and heterodimer with SOD1. Interacts with COMMD1. Interacts with XIAP/BIRC4. Interacts with SLC31A1(via C-terminal domain); this interaction is Cu(1+)-mediated. The heterodimer CCS:SOD1 interacts with SLC31A1; this heterotrimer is Cu(1+)-mediated and its maintenance is regulated through SOD1 activation. The cofactor is Cu(2+). Requires Zn(2+) as cofactor. In terms of processing, ubiquitinion by XIAP/BIRC4 leads to enhancement of its chaperone activity toward its physiologic target, SOD1, rather than proteasomal degradation. XIAP/BIRC4 preferentially ubiquitinates at Lys-241.

The protein localises to the cytoplasm. Functionally, delivers copper to copper zinc superoxide dismutase (SOD1). The sequence is that of Copper chaperone for superoxide dismutase from Sus scrofa (Pig).